The primary structure comprises 408 residues: NFATC2-interacting protein (408 aa).

The tract at residues 1 to 113 (MAEPVGKRGR…LDPGEAPLVP (113 aa)) is disordered. Residues 24–40 (QRSPSRGTLDVVSVDLV) are compositionally biased toward low complexity. Residues Ser41, Ser43, Ser73, Ser77, Ser79, Ser81, and Ser116 each carry the phosphoserine modification. Residues Lys118 and Lys120 each participate in a glycyl lysine isopeptide (Lys-Gly) (interchain with G-Cter in SUMO2) cross-link. The tract at residues 141-205 (EEEVELADSS…TKSRKHTRAL (65 aa)) is disordered. A compositionally biased stretch (basic and acidic residues) spans 169–181 (RTKDKEEKKKTEI). Ser187, Ser190, and Ser193 each carry phosphoserine. Positions 196–205 (TKSRKHTRAL) are enriched in basic residues. The stretch at 197 to 220 (KSRKHTRALKKLSEVNKRLQDLRS) forms a coiled coil. Phosphoserine occurs at positions 209 and 303. Thr305 and Thr307 each carry phosphothreonine. A Ubiquitin-like domain is found at 337–408 (LQLRVQGKEK…ESGDLIEVWG (72 aa)). Phosphoserine occurs at positions 358 and 379.

As to quaternary structure, interacts with NFATC2, TRAF1, TRAF2 and PRMT1. Interacts with UBE2I/UBC9. In terms of processing, methylation at the N-terminus by PRMT1 modulates interaction with the NFAT complex and results in augmented cytokine production.

It localises to the nucleus. The protein resides in the cytoplasm. In terms of biological role, in T-helper 2 (Th2) cells, regulates the magnitude of NFAT-driven transcription of a specific subset of cytokine genes, including IL3, IL4, IL5 and IL13, but not IL2. Recruits PRMT1 to the IL4 promoter; this leads to enhancement of histone H4 'Arg-3'-methylation and facilitates subsequent histone acetylation at the IL4 locus, thus promotes robust cytokine expression. Down-regulates formation of poly-SUMO chains by UBE2I/UBC9. This chain is NFATC2-interacting protein (NFATC2IP), found in Macaca fascicularis (Crab-eating macaque).